The chain runs to 573 residues: Transcription factor E3 (573 aa).

The residue at position 47 (S47) is a Phosphoserine; by MTOR. The tract at residues 91–151 (TLSASSSAEG…SPAPASPAIS (61 aa)) is disordered. Residues 107-126 (SSSSSSRVLLRQQLMRAQAQ) are compositionally biased toward low complexity. A compositionally biased stretch (basic and acidic residues) spans 127-136 (EQERRERREQ). The span at 137–151 (ASSFPSPAPASPAIS) shows a compositional bias: low complexity. R186 carries the post-translational modification Asymmetric dimethylarginine. The tract at residues 209-248 (LASQALTPPPGGASVQPLPTPEAAHAPGPTSSAPNSPMAL) is disordered. Residues 258 to 269 (EIDDVIDEIISL) form a strong transcription activation domain region. Residue S319 is modified to Phosphoserine; by MTOR. Residue K337 forms a Glycyl lysine isopeptide (Lys-Gly) (interchain with G-Cter in SUMO2) linkage. One can recognise a bHLH domain in the interval 344–397 (QKKDNHNLIERRRRFNINDRIKELGTLIPKSSDPEMRWNKGTILKASVDYIRKL). Positions 354-357 (RRRR) match the Nuclear localization signal motif. Residues 407–428 (LESRQRSLEQANRSLQLRIQEL) are leucine-zipper. The interval 531-573 (VGGLSGGTLSPLRAASDPLLSSVSPAVSKASSRRSSFSMEEES) is disordered. Over residues 537–573 (GTLSPLRAASDPLLSSVSPAVSKASSRRSSFSMEEES) the composition is skewed to low complexity. S540, S546, S552, S554, S558, and S566 each carry phosphoserine.

The protein belongs to the MiT/TFE family. Homodimer and heterodimer; with TFEB or MITF. Interacts with RRAGC/RagC GDP-bound and RRAGD/RagD GDP-bound; promoting its recruitment to lysosomal membrane in the presence of nutrients. Phosphorylation ar Ser-47 and Ser-319 by MTOR via non-canonical mTORC1 pathway regulates its stability and subcellular location, respectively. When nutrients are present, phosphorylation by MTOR at Ser-47 promotes ubiquitination by the SCF(BTRC) complex, followed by degradation. When nutrients are present, phosphorylation by MTOR at Ser-319 also promotes association with 14-3-3/YWHA adapters and retention in the cytosol. Phosphorylation at Ser-47 plays a more critical role than phosphorylation at Ser-319 for TFE3 inactivation. Inhibition of mTORC1, starvation and lysosomal disruption, promotes dephosphorylation and transcription factor activity. Post-translationally, ubiquitinated by the SCF(BTRC) and SCF(FBXW11) complexes following phosphorylation at Ser-47 by MTOR, leading to its degradation by the proteasome. In terms of processing, sumoylated; does not affect dimerization with MITF.

It localises to the cytoplasm. Its subcellular location is the cytosol. The protein localises to the nucleus. It is found in the lysosome membrane. Its function is as follows. Transcription factor that acts as a master regulator of lysosomal biogenesis and immune response. Specifically recognizes and binds E-box sequences (5'-CANNTG-3'); efficient DNA-binding requires dimerization with itself or with another MiT/TFE family member such as TFEB or MITF. Involved in the cellular response to amino acid availability by acting downstream of MTOR: in the presence of nutrients, TFE3 phosphorylation by MTOR promotes its inactivation. Upon starvation or lysosomal stress, inhibition of MTOR induces TFE3 dephosphorylation, resulting in transcription factor activity. Specifically recognizes and binds the CLEAR-box sequence (5'-GTCACGTGAC-3') present in the regulatory region of many lysosomal genes, leading to activate their expression, thereby playing a central role in expression of lysosomal genes. Maintains the pluripotent state of embryonic stem cells by promoting the expression of genes such as ESRRB; mTOR-dependent TFE3 cytosolic retention and inactivation promotes exit from pluripotency. Required to maintain the naive pluripotent state of hematopoietic stem cell; mTOR-dependent cytoplasmic retention of TFE3 promotes the exit of hematopoietic stem cell from pluripotency. TFE3 activity is also involved in the inhibition of neuronal progenitor differentiation. Acts as a positive regulator of browning of adipose tissue by promoting expression of target genes; mTOR-dependent phosphorylation promotes cytoplasmic retention of TFE3 and inhibits browning of adipose tissue. In association with TFEB, activates the expression of CD40L in T-cells, thereby playing a role in T-cell-dependent antibody responses in activated CD4(+) T-cells and thymus-dependent humoral immunity. Specifically recognizes the MUE3 box, a subset of E-boxes, present in the immunoglobulin enhancer. It also binds very well to a USF/MLTF site. May regulate lysosomal positioning in response to nutrient deprivation by promoting the expression of PIP4P1. The polypeptide is Transcription factor E3 (Bos taurus (Bovine)).